The primary structure comprises 297 residues: Virulence genes transcriptional activator SpvR (297 aa).

The region spanning 1-61 is the HTH lysR-type domain; the sequence is MDFLINKKLK…IRKNGTLIPT (61 aa). Residues 21-40 constitute a DNA-binding region (H-T-H motif); it reads FSIATSVLYITRTPLSRVIS.

The protein belongs to the LysR transcriptional regulatory family.

The protein localises to the cytoplasm. Functionally, positive regulator for the plasmid-encoded virulence factors SpvA, SpvB, and SpvC. This chain is Virulence genes transcriptional activator SpvR (spvR), found in Salmonella dublin.